Consider the following 320-residue polypeptide: Cytochrome f (320 aa).

An N-terminal signal peptide occupies residues 1–35 (MQTRNTFSWIREEITRSISVSLMIYIITWASISSA). The heme site is built by Tyr36, Cys56, Cys59, and His60. The helical transmembrane segment at 286-305 (VQGLLFFLGSVVLAQIFLVL) threads the bilayer.

The protein belongs to the cytochrome f family. As to quaternary structure, the 4 large subunits of the cytochrome b6-f complex are cytochrome b6, subunit IV (17 kDa polypeptide, petD), cytochrome f and the Rieske protein, while the 4 small subunits are PetG, PetL, PetM and PetN. The complex functions as a dimer. Heme serves as cofactor. Purified from leaves as a water-soluble monomeric protein with a mass of 28.16 kDa, cleavage occurs after Gln-287 and separates the heme-binding from the membrane.

Its subcellular location is the plastid. The protein resides in the chloroplast thylakoid membrane. In terms of biological role, component of the cytochrome b6-f complex, which mediates electron transfer between photosystem II (PSII) and photosystem I (PSI), cyclic electron flow around PSI, and state transitions. The polypeptide is Cytochrome f (petA) (Brassica rapa subsp. rapa (Turnip)).